The chain runs to 958 residues: Glycine dehydrogenase (decarboxylating) (958 aa).

An N6-(pyridoxal phosphate)lysine modification is found at Lys-705.

The protein belongs to the GcvP family. The glycine cleavage system is composed of four proteins: P, T, L and H. Pyridoxal 5'-phosphate serves as cofactor.

The enzyme catalyses N(6)-[(R)-lipoyl]-L-lysyl-[glycine-cleavage complex H protein] + glycine + H(+) = N(6)-[(R)-S(8)-aminomethyldihydrolipoyl]-L-lysyl-[glycine-cleavage complex H protein] + CO2. In terms of biological role, the glycine cleavage system catalyzes the degradation of glycine. The P protein binds the alpha-amino group of glycine through its pyridoxal phosphate cofactor; CO(2) is released and the remaining methylamine moiety is then transferred to the lipoamide cofactor of the H protein. The polypeptide is Glycine dehydrogenase (decarboxylating) (Bdellovibrio bacteriovorus (strain ATCC 15356 / DSM 50701 / NCIMB 9529 / HD100)).